The sequence spans 35 residues: Protein YbgU (35 aa).

This chain is Protein YbgU, found in Escherichia coli (strain K12).